We begin with the raw amino-acid sequence, 417 residues long: D-amino acid dehydrogenase (417 aa).

FAD is bound at residue 3–17 (VVILGSGVIGVTSAW).

This sequence belongs to the DadA oxidoreductase family. Requires FAD as cofactor.

The catalysed reaction is a D-alpha-amino acid + A + H2O = a 2-oxocarboxylate + AH2 + NH4(+). Its pathway is amino-acid degradation; D-alanine degradation; NH(3) and pyruvate from D-alanine: step 1/1. Oxidative deamination of D-amino acids. This is D-amino acid dehydrogenase from Edwardsiella ictaluri (strain 93-146).